The following is a 663-amino-acid chain: Cytoplasmic dynein 1 intermediate chain (663 aa).

Residues Leu-17–Ala-37 show a composition bias toward basic and acidic residues. Disordered stretches follow at residues Leu-17–Lys-52 and Ser-75–Pro-107. Residues Ser-75–Asn-85 show a composition bias toward low complexity. The span at Thr-86–Gly-99 shows a compositional bias: polar residues. WD repeat units follow at residues Ser-311–Glu-360, His-364–Ile-404, Ala-413–Asp-454, Ser-463–Asn-503, Arg-508–Ser-553, Asp-556–Thr-596, and Ala-602–Ser-641.

The protein belongs to the dynein intermediate chain family. Homodimer. The cytoplasmic dynein 1 complex consists of two catalytic heavy chains (HCs) and a number of non-catalytic subunits presented by intermediate chains (ICs), light intermediate chains (LICs) and light chains (LCs). High levels of isoform 1b, isoform 1c, isoform 3a and isoform 4 accumulate in early egg chambers and at stage 9 become concentrated at the posterior of the oocyte. Isoform 5a and isoform 5b are highly expressed in adult head and to a lesser extent in adult torso. Isoform 1a, isoform 2a and isoform 2b are found in all tissues examined, including ovaries, midgut, torso and head.

It is found in the cytoplasm. The protein localises to the cytoskeleton. It localises to the lysosome membrane. The protein resides in the nucleus membrane. Acts as one of several non-catalytic accessory components of the cytoplasmic dynein 1 complex that are thought to be involved in linking dynein to cargos and to adapter proteins that regulate dynein function. Cytoplasmic dynein 1 acts as a motor for the intracellular retrograde motility of vesicles and organelles along microtubules. The intermediate chains mediate the help dynein bind to dynactin 150 kDa component. The polypeptide is Cytoplasmic dynein 1 intermediate chain (sw) (Drosophila melanogaster (Fruit fly)).